A 598-amino-acid polypeptide reads, in one-letter code: IQ calmodulin-binding motif-containing protein 1 (598 aa).

The interval 1 to 157 (MKPAGTDPRI…SLFWLLGGHV (157 aa)) is interaction with BBS1, BBS8 and BBS9. The segment at 287–598 (QEVEEQKLHK…MLFIGGTKPP (312 aa)) is interaction with CEP290, BBS1, BBS2, BBS4, BBS5, BBS7, BBS8 and BBS9. 4 consecutive IQ domains span residues 294-317 (LHKA…LKKL), 318-338 (PSAV…MMLE), 387-416 (EEKS…SLTE), and 417-437 (YKAA…CRKK). A coiled-coil region spans residues 336 to 362 (MLELNRQKEEEDLRLKLQLQRQRAMRL). Residues 530–598 (AEGKEPEQFL…MLFIGGTKPP (69 aa)) are interaction with BBS1, BBS2, BBS4, BBS7, BBS8 and BBS9.

As to quaternary structure, interacts with calmodulin. Interacts with CEP290/NPHP6; IQCB1/NPHP5 and CEP290/NPHP6; are proposed to form a functional NPHP5-6 module localized to the centrosome. Interacts with ATXN10. Interacts with NPHP1, INVS, NPHP4 and RPGRIP1L; these interactions likely require additional interactors. Associates with the BBSome complex; interacts with BBS1, BBS2, BBS4, BBS5, BBS7, BBS8 and BBS9. Localized to the outer segment and connecting cilia of photoreceptor cells.

Its subcellular location is the cytoplasm. It localises to the cytoskeleton. The protein resides in the microtubule organizing center. It is found in the centrosome. Its function is as follows. Involved in ciliogenesis. The function in an early step in cilia formation depends on its association with CEP290/NPHP6. Involved in regulation of the BBSome complex integrity, specifically for presence of BBS2 and BBS5 in the complex, and in ciliary targeting of selected BBSome cargos. May play a role in controlling entry of the BBSome complex to cilia possibly implicating CEP290/NPHP6. The chain is IQ calmodulin-binding motif-containing protein 1 (Iqcb1) from Mus musculus (Mouse).